An 854-amino-acid chain; its full sequence is Putative Tricorn-like protease C-terminal subunit (854 aa).

Catalysis depends on H539, which acts as the Charge relay system. Residues P554 to E646 form a PDZ-like region. A substrate-binding site is contributed by G709. S756 (nucleophile) is an active-site residue. Catalysis depends on E814, which acts as the Charge relay system.

This sequence belongs to the peptidase S41B family.

It is found in the cytoplasm. Degrades oligopeptides in a sequential manner. The chain is Putative Tricorn-like protease C-terminal subunit (triC) from Sulfurisphaera tokodaii (strain DSM 16993 / JCM 10545 / NBRC 100140 / 7) (Sulfolobus tokodaii).